Consider the following 409-residue polypeptide: TAR DNA-binding protein 43 (409 aa).

2 RRM domains span residues 105-200 (SDLI…RCTE) and 191-262 (RKVF…TAEP). Disordered stretches follow at residues 260 to 302 (AEPK…NQGG) and 341 to 409 (SQQN…GWGM). A compositionally biased stretch (basic and acidic residues) spans 261-274 (EPKHNNNRQLERGG). Positions 281-292 (FGNQGYPNSRPS) are enriched in polar residues. Composition is skewed to low complexity over residues 341-387 (SQQN…PNAG) and 395-409 (GFSS…GWGM).

As to quaternary structure, homodimer.

Its subcellular location is the nucleus. It localises to the cytoplasm. The protein resides in the stress granule. It is found in the mitochondrion. Functionally, probably involved in transcriptional repression. May play a role in the maintenance of the circadian clock periodicity. The polypeptide is TAR DNA-binding protein 43 (tardbp) (Xenopus tropicalis (Western clawed frog)).